Here is a 500-residue protein sequence, read N- to C-terminus: NAD(P)H-quinone oxidoreductase chain 4, chloroplastic (500 aa).

15 helical membrane-spanning segments follow: residues 4–24 (FYWL…IALL), 35–55 (YTIC…CYHF), 80–100 (LGID…TTLA), 113–130 (LFHF…GSFS), 134–154 (LLLF…LLSM), 167–187 (FILY…GMGL), 208–228 (ALEI…SPII), 242–262 (HYST…YGLV), 274–294 (SIFS…AALT), 305–325 (IAYS…SITD), 330–350 (GAIL…FLAG), 364–384 (MGGI…FSMA), 386–406 (LALP…GIIT), 416–436 (ILIT…SLSM), and 462–482 (IFIF…PDFV).

It belongs to the complex I subunit 4 family.

It localises to the plastid. Its subcellular location is the chloroplast thylakoid membrane. It carries out the reaction a plastoquinone + NADH + (n+1) H(+)(in) = a plastoquinol + NAD(+) + n H(+)(out). The enzyme catalyses a plastoquinone + NADPH + (n+1) H(+)(in) = a plastoquinol + NADP(+) + n H(+)(out). This is NAD(P)H-quinone oxidoreductase chain 4, chloroplastic from Nymphaea alba (White water-lily).